The primary structure comprises 349 residues: Delta(7)-sterol 5(6)-desaturase ERG3A (349 aa).

Helical transmembrane passes span 84-104, 124-144, and 162-182; these read ITWI…YIFI, IIAA…FFLL, and LWYD…CIYW. Residues 170 to 296 form the Fatty acid hydroxylase domain; it reads PLFLLFTDFC…FTAFDRMGGT (127 aa). The Histidine box-1 signature appears at 184-188; it reads HRWLH. Positions 197–201 match the Histidine box-2 motif; the sequence is HKLHH. The chain crosses the membrane as a helical span at residues 227-247; sequence HIFPFIFPLQKMAYVALFVFV. Residues 272–276 carry the Histidine box-3 motif; sequence HSLHH.

It belongs to the sterol desaturase family.

The protein localises to the endoplasmic reticulum membrane. The enzyme catalyses episterol + 2 Fe(II)-[cytochrome b5] + O2 + 2 H(+) = 5-dehydroepisterol + 2 Fe(III)-[cytochrome b5] + 2 H2O. It functions in the pathway steroid metabolism; ergosterol biosynthesis. C-5 sterol desaturase; part of the third module of ergosterol biosynthesis pathway that includes the late steps of the pathway. ERG3A and ERG3BB catalyze the introduction of a C-5 double bond in the B ring to produce 5-dehydroepisterol. The third module or late pathway involves the ergosterol synthesis itself through consecutive reactions that mainly occur in the endoplasmic reticulum (ER) membrane. Firstly, the squalene synthase ERG9 catalyzes the condensation of 2 farnesyl pyrophosphate moieties to form squalene, which is the precursor of all steroids. Squalene synthase is crucial for balancing the incorporation of farnesyl diphosphate (FPP) into sterol and nonsterol isoprene synthesis. Secondly, squalene is converted into lanosterol by the consecutive action of the squalene epoxidase ERG1 and the lanosterol synthase ERG7. Then, the delta(24)-sterol C-methyltransferase ERG6 methylates lanosterol at C-24 to produce eburicol. Eburicol is the substrate of the sterol 14-alpha demethylase encoded by CYP51A, CYP51B and CYP51C, to yield 4,4,24-trimethyl ergosta-8,14,24(28)-trienol. CYP51B encodes the enzyme primarily responsible for sterol 14-alpha-demethylation, and plays an essential role in ascospore formation. CYP51A encodes an additional sterol 14-alpha-demethylase, induced on ergosterol depletion and responsible for the intrinsic variation in azole sensitivity. The third CYP51 isoform, CYP51C, does not encode a sterol 14-alpha-demethylase, but is required for full virulence on host wheat ears. The C-14 reductase ERG24 then reduces the C14=C15 double bond which leads to 4,4-dimethylfecosterol. A sequence of further demethylations at C-4, involving the C-4 demethylation complex containing the C-4 methylsterol oxidases ERG25, the sterol-4-alpha-carboxylate 3-dehydrogenase ERG26 and the 3-keto-steroid reductase ERG27, leads to the production of fecosterol via 4-methylfecosterol. ERG28 has a role as a scaffold to help anchor ERG25, ERG26 and ERG27 to the endoplasmic reticulum. The C-8 sterol isomerase ERG2 then catalyzes the reaction which results in unsaturation at C-7 in the B ring of sterols and thus converts fecosterol to episterol. The sterol-C5-desaturases ERG3A and ERG3BB then catalyze the introduction of a C-5 double bond in the B ring to produce 5-dehydroepisterol. The C-22 sterol desaturases ERG5A and ERG5B further convert 5-dehydroepisterol into ergosta-5,7,22,24(28)-tetraen-3beta-ol by forming the C-22(23) double bond in the sterol side chain. Finally, ergosta-5,7,22,24(28)-tetraen-3beta-ol is substrate of the C-24(28) sterol reductase ERG4 to produce ergosterol. This chain is Delta(7)-sterol 5(6)-desaturase ERG3A, found in Gibberella zeae (strain ATCC MYA-4620 / CBS 123657 / FGSC 9075 / NRRL 31084 / PH-1) (Wheat head blight fungus).